We begin with the raw amino-acid sequence, 211 residues long: Molybdenum cofactor guanylyltransferase (211 aa).

GTP is bound by residues 12 to 14, lysine 25, asparagine 53, aspartate 71, and aspartate 101; that span reads LAG. Aspartate 101 is a Mg(2+) binding site.

It belongs to the MobA family. Monomer. Mg(2+) serves as cofactor.

The protein localises to the cytoplasm. It catalyses the reaction Mo-molybdopterin + GTP + H(+) = Mo-molybdopterin guanine dinucleotide + diphosphate. In terms of biological role, transfers a GMP moiety from GTP to Mo-molybdopterin (Mo-MPT) cofactor (Moco or molybdenum cofactor) to form Mo-molybdopterin guanine dinucleotide (Mo-MGD) cofactor. This Acidovorax sp. (strain JS42) protein is Molybdenum cofactor guanylyltransferase.